A 484-amino-acid polypeptide reads, in one-letter code: Glutamate--tRNA ligase (484 aa).

Residues 11 to 21 (PSPTGYLHIGN) carry the 'HIGH' region motif. The 'KMSKS' region motif lies at 252–256 (KLSKR). Lys-255 is a binding site for ATP.

It belongs to the class-I aminoacyl-tRNA synthetase family. Glutamate--tRNA ligase type 1 subfamily. As to quaternary structure, monomer.

The protein localises to the cytoplasm. The enzyme catalyses tRNA(Glu) + L-glutamate + ATP = L-glutamyl-tRNA(Glu) + AMP + diphosphate. Catalyzes the attachment of glutamate to tRNA(Glu) in a two-step reaction: glutamate is first activated by ATP to form Glu-AMP and then transferred to the acceptor end of tRNA(Glu). The protein is Glutamate--tRNA ligase of Staphylococcus aureus (strain MRSA252).